A 240-amino-acid chain; its full sequence is Glutathione S-transferase omega-1 (240 aa).

Ser-2 is modified (N-acetylserine). Residues 22–101 (GQIRVYSMRF…YLDEAYPEKK (80 aa)) enclose the GST N-terminal domain. The active-site Nucleophile is Cys-32. Lys-57 carries the N6-acetyllysine modification. Residues Lys-59, Val-72, and 85–86 (ES) each bind glutathione. The GST C-terminal domain occupies 106 to 227 (DPYKKARQKM…AKTYREYLNL (122 aa)). Residue Ser-129 is modified to Phosphoserine. The residue at position 152 (Lys-152) is an N6-acetyllysine.

It belongs to the GST superfamily. Omega family. As to quaternary structure, homodimer.

Its subcellular location is the cytoplasm. It localises to the cytosol. It carries out the reaction RX + glutathione = an S-substituted glutathione + a halide anion + H(+). The enzyme catalyses L-dehydroascorbate + 2 glutathione = glutathione disulfide + L-ascorbate. The catalysed reaction is methylarsonate + 2 glutathione + H(+) = methylarsonous acid + glutathione disulfide + H2O. Its function is as follows. Exhibits glutathione-dependent thiol transferase and dehydroascorbate reductase activities. Has S-(phenacyl)glutathione reductase activity. Also has glutathione S-transferase activity. Participates in the biotransformation of inorganic arsenic and reduces monomethylarsonic acid (MMA) and dimethylarsonic acid. The chain is Glutathione S-transferase omega-1 (Gsto1) from Mus musculus (Mouse).